We begin with the raw amino-acid sequence, 325 residues long: Psp operon transcriptional activator (325 aa).

The Sigma-54 factor interaction domain maps to 15–237 (FLEVLEQVSH…ELKNVVERSV (223 aa)). Residues 36–43 (GERGTGKE) and 99–108 (ADGGTLFLDE) contribute to the ATP site. A DNA-binding region (H-T-H motif) is located at residues 302–321 (QKRAAELLGLTYHQFRALLK).

In terms of assembly, forms a complex with PspA, which is composed of around 6 PspF subunits and 6 PspA subunits.

It is found in the cytoplasm. With respect to regulation, ATPase activity is inhibited by interaction with PspA. Under inducing conditions, the interaction is disrupted, allowing activation of psp transcription. Transcriptional activator for the phage shock protein (psp) operon (pspABCDE) and pspG gene. The chain is Psp operon transcriptional activator (pspF) from Escherichia coli (strain K12).